Reading from the N-terminus, the 187-residue chain is UPF0301 protein YqgE (187 aa).

The protein belongs to the UPF0301 (AlgH) family.

This chain is UPF0301 protein YqgE, found in Salmonella paratyphi B (strain ATCC BAA-1250 / SPB7).